The chain runs to 48 residues: ATP synthase protein 8 (48 aa).

The helical transmembrane segment at 12–32 (LLTGGILAISLLLYFVATYLL) threads the bilayer.

It belongs to the ATPase protein 8 family. In terms of assembly, F-type ATPases have 2 components, CF(1) - the catalytic core - and CF(0) - the membrane proton channel.

Its subcellular location is the mitochondrion membrane. In terms of biological role, mitochondrial membrane ATP synthase (F(1)F(0) ATP synthase or Complex V) produces ATP from ADP in the presence of a proton gradient across the membrane which is generated by electron transport complexes of the respiratory chain. F-type ATPases consist of two structural domains, F(1) - containing the extramembraneous catalytic core and F(0) - containing the membrane proton channel, linked together by a central stalk and a peripheral stalk. During catalysis, ATP synthesis in the catalytic domain of F(1) is coupled via a rotary mechanism of the central stalk subunits to proton translocation. Part of the complex F(0) domain. Minor subunit located with subunit a in the membrane. The polypeptide is ATP synthase protein 8 (ATP8) (Candida parapsilosis (Yeast)).